The chain runs to 348 residues: UDP-3-O-acylglucosamine N-acyltransferase (348 aa).

The Proton acceptor role is filled by His257.

It belongs to the transferase hexapeptide repeat family. LpxD subfamily. Homotrimer.

The enzyme catalyses a UDP-3-O-[(3R)-3-hydroxyacyl]-alpha-D-glucosamine + a (3R)-hydroxyacyl-[ACP] = a UDP-2-N,3-O-bis[(3R)-3-hydroxyacyl]-alpha-D-glucosamine + holo-[ACP] + H(+). The protein operates within bacterial outer membrane biogenesis; LPS lipid A biosynthesis. In terms of biological role, catalyzes the N-acylation of UDP-3-O-acylglucosamine using 3-hydroxyacyl-ACP as the acyl donor. Is involved in the biosynthesis of lipid A, a phosphorylated glycolipid that anchors the lipopolysaccharide to the outer membrane of the cell. This is UDP-3-O-acylglucosamine N-acyltransferase from Bartonella quintana (strain Toulouse) (Rochalimaea quintana).